The chain runs to 477 residues: Aspartyl/glutamyl-tRNA(Asn/Gln) amidotransferase subunit B (477 aa).

This sequence belongs to the GatB/GatE family. GatB subfamily. In terms of assembly, heterotrimer of A, B and C subunits.

The catalysed reaction is L-glutamyl-tRNA(Gln) + L-glutamine + ATP + H2O = L-glutaminyl-tRNA(Gln) + L-glutamate + ADP + phosphate + H(+). It catalyses the reaction L-aspartyl-tRNA(Asn) + L-glutamine + ATP + H2O = L-asparaginyl-tRNA(Asn) + L-glutamate + ADP + phosphate + 2 H(+). Functionally, allows the formation of correctly charged Asn-tRNA(Asn) or Gln-tRNA(Gln) through the transamidation of misacylated Asp-tRNA(Asn) or Glu-tRNA(Gln) in organisms which lack either or both of asparaginyl-tRNA or glutaminyl-tRNA synthetases. The reaction takes place in the presence of glutamine and ATP through an activated phospho-Asp-tRNA(Asn) or phospho-Glu-tRNA(Gln). The protein is Aspartyl/glutamyl-tRNA(Asn/Gln) amidotransferase subunit B of Coxiella burnetii (strain CbuG_Q212) (Coxiella burnetii (strain Q212)).